We begin with the raw amino-acid sequence, 331 residues long: 2-isopropylmalate synthase (331 aa).

The 80-residue stretch at 1 to 80 (RDEVVRGRDV…YTRINTREIY (80 aa)) folds into the Pyruvate carboxyltransferase domain. Positions 15, 17, and 51 each coordinate Mn(2+). Positions 205 to 331 (QLEHVQFFSG…PSIEEVHRGV (127 aa)) are regulatory domain.

Belongs to the alpha-IPM synthase/homocitrate synthase family. LeuA type 1 subfamily. As to quaternary structure, homotetramer. Mn(2+) is required as a cofactor.

Its subcellular location is the cytoplasm. The catalysed reaction is 3-methyl-2-oxobutanoate + acetyl-CoA + H2O = (2S)-2-isopropylmalate + CoA + H(+). It participates in amino-acid biosynthesis; L-leucine biosynthesis; L-leucine from 3-methyl-2-oxobutanoate: step 1/4. In terms of biological role, catalyzes the condensation of the acetyl group of acetyl-CoA with 3-methyl-2-oxobutanoate (2-oxoisovalerate) to form 3-carboxy-3-hydroxy-4-methylpentanoate (2-isopropylmalate). The polypeptide is 2-isopropylmalate synthase (Thermus thermophilus).